Consider the following 143-residue polypeptide: Large ribosomal subunit protein uL11 (143 aa).

This sequence belongs to the universal ribosomal protein uL11 family. In terms of assembly, part of the ribosomal stalk of the 50S ribosomal subunit. Interacts with L10 and the large rRNA to form the base of the stalk. L10 forms an elongated spine to which L12 dimers bind in a sequential fashion forming a multimeric L10(L12)X complex. One or more lysine residues are methylated.

In terms of biological role, forms part of the ribosomal stalk which helps the ribosome interact with GTP-bound translation factors. In Rhizobium etli (strain CIAT 652), this protein is Large ribosomal subunit protein uL11.